A 261-amino-acid polypeptide reads, in one-letter code: Ribosomal RNA small subunit methyltransferase A (261 aa).

Residues His12, Leu14, Gly39, Glu60, Asp81, and Asn104 each contribute to the S-adenosyl-L-methionine site.

The protein belongs to the class I-like SAM-binding methyltransferase superfamily. rRNA adenine N(6)-methyltransferase family. RsmA subfamily.

It localises to the cytoplasm. It carries out the reaction adenosine(1518)/adenosine(1519) in 16S rRNA + 4 S-adenosyl-L-methionine = N(6)-dimethyladenosine(1518)/N(6)-dimethyladenosine(1519) in 16S rRNA + 4 S-adenosyl-L-homocysteine + 4 H(+). In terms of biological role, specifically dimethylates two adjacent adenosines (A1518 and A1519) in the loop of a conserved hairpin near the 3'-end of 16S rRNA in the 30S particle. May play a critical role in biogenesis of 30S subunits. The protein is Ribosomal RNA small subunit methyltransferase A of Albidiferax ferrireducens (strain ATCC BAA-621 / DSM 15236 / T118) (Rhodoferax ferrireducens).